The following is a 923-amino-acid chain: Tyrosine-protein kinase receptor torso (923 aa).

The first 20 residues, 1 to 20 (MLIFYAKYAFIFWFFVGSNQ), serve as a signal peptide directing secretion. The Extracellular segment spans residues 21–399 (GEMLLMDKIS…VLLSEGNMVK (379 aa)). N-linked (GlcNAc...) asparagine glycans are attached at residues N37, N63, N107, N142, N146, N287, N298, N314, N326, N342, N348, and N377. The helical transmembrane segment at 400–420 (LVLFIIVPICCILMLCSLTFC) threads the bilayer. Residues 421-923 (RRNRSEVQAL…EEELYLEPLN (503 aa)) lie on the Cytoplasmic side of the membrane. Residues 475 to 874 (VLLQDVLGEG…TFSALKHRLG (400 aa)) form the Protein kinase domain. ATP is bound by residues 481 to 489 (LGEGAFGLV) and K502. Position 608 is a phosphoserine (S608). The disordered stretch occupies residues 656–687 (YIPKTAEAPKDRPKRKLKPQPKKDSKQDFKSD). Residues 676–687 (PKKDSKQDFKSD) are compositionally biased toward basic and acidic residues. Residue D741 is the Proton acceptor of the active site.

It belongs to the protein kinase superfamily. Tyr protein kinase family. Requires Mg(2+) as cofactor. In terms of processing, may be auto-phosphorylated on tyrosine residues.

It is found in the membrane. The enzyme catalyses L-tyrosyl-[protein] + ATP = O-phospho-L-tyrosyl-[protein] + ADP + H(+). Its function is as follows. Probable receptor tyrosine kinase which is required for determination of anterior and posterior terminal structures in the embryo. During postembryonic development, involved in the initiation of metamorphosis probably by inducing the production of ecdysone in response to prothoracicotropic hormone Ptth. Binding to Ptth stimulates activation of canonical MAPK signaling leading to ERK phosphorylation. This Drosophila melanogaster (Fruit fly) protein is Tyrosine-protein kinase receptor torso (tor).